The primary structure comprises 845 residues: Aryl hydrocarbon receptor (845 aa).

A propeptide spanning residues 1 to 10 (MNSSSASITY) is cleaved from the precursor. Over residues 1–10 (MNSSSASITY) the composition is skewed to polar residues. Residues 1–39 (MNSSSASITYASRKRRKPVQKTVKPVPAEGIKSNPSKRH) form a disordered region. 2 consecutive short sequence motifs (nuclear localization signal) follow at residues 13-16 (RKRR) and 37-42 (KRHRDR). The bHLH domain maps to 27-80 (PAEGIKSNPSKRHRDRLNTELDRLASLLPFPQDVVNKLDKLSVLRLSVSYLRAK). 3 required for maintaining the overall integrity of the AHR:ARNT heterodimer and its transcriptional activity regions span residues 50-82 (LASL…AKSF), 117-125 (LLQALNGFV), and 265-267 (FAI). The Nuclear export signal motif lies at 64 to 72 (LDKLSVLRL). A PAS 1 domain is found at 110 to 180 (NLQEGEFLLQ…RQLHWALNPS (71 aa)). One can recognise a PAS 2 domain in the interval 274–341 (PSILEIRTKN…CAEYHIRMIK (68 aa)). Residues 347–385 (LIVFRLLTKDNRWTWVQSNARLVYKNGRPDYIIATQRPL) form the PAC domain. The segment at 820-845 (NNTQPTTHLHPSEARPFSDLTSSGFL) is disordered.

Homodimer. Heterodimer; efficient DNA binding requires dimerization with another bHLH protein. Interacts with ARNT; the heterodimer ARNT:AHR binds to core DNA sequence 5'-TGCGTG-3' within the dioxin response element (DRE) of target gene promoters and activates their transcription. Binds MYBBP1A. Interacts with coactivators including SRC-1, RIP140 and NOCA7, and with the corepressor SMRT. Interacts with NEDD8 and IVNS1ABP. Interacts with BMAL1. Interacts with HSP90AB1. Interacts with TIPARP; leading to mono-ADP-ribosylation of AHR and subsequent inhibition of AHR. In terms of processing, mono-ADP-ribosylated, leading to inhibit transcription activator activity of AHR.

It localises to the cytoplasm. It is found in the nucleus. In terms of biological role, ligand-activated transcription factor that enables cells to adapt to changing conditions by sensing compounds from the environment, diet, microbiome and cellular metabolism, and which plays important roles in development, immunity and cancer. Upon ligand binding, translocates into the nucleus, where it heterodimerizes with ARNT and induces transcription by binding to xenobiotic response elements (XRE). Regulates a variety of biological processes, including angiogenesis, hematopoiesis, drug and lipid metabolism, cell motility and immune modulation. Xenobiotics can act as ligands: upon xenobiotic-binding, activates the expression of multiple phase I and II xenobiotic chemical metabolizing enzyme genes (such as the CYP1A1 gene). Mediates biochemical and toxic effects of halogenated aromatic hydrocarbons. Next to xenobiotics, natural ligands derived from plants, microbiota, and endogenous metabolism are potent AHR agonists. Tryptophan (Trp) derivatives constitute an important class of endogenous AHR ligands. Acts as a negative regulator of anti-tumor immunity: indoles and kynurenic acid generated by Trp catabolism act as ligand and activate AHR, thereby promoting AHR-driven cancer cell motility and suppressing adaptive immunity. Regulates the circadian clock by inhibiting the basal and circadian expression of the core circadian component PER1. Inhibits PER1 by repressing the CLOCK-BMAL1 heterodimer mediated transcriptional activation of PER1. The heterodimer ARNT:AHR binds to core DNA sequence 5'-TGCGTG-3' within the dioxin response element (DRE) of target gene promoters and activates their transcription. This Delphinapterus leucas (Beluga whale) protein is Aryl hydrocarbon receptor (AHR).